We begin with the raw amino-acid sequence, 97 residues long: Protein YukE (97 aa).

A coiled-coil region spans residues 21–94 (VESQEVLNQV…ESTDQDIANQ (74 aa)).

The protein belongs to the WXG100 family. sagEsxA-like subfamily. As to quaternary structure, homodimer.

It is found in the secreted. Its function is as follows. Required to deliver LXG toxins to target cells. This is Protein YukE (yukE) from Bacillus subtilis (strain 168).